Consider the following 146-residue polypeptide: Ribonuclease H (146 aa).

The region spanning Met1–Gln143 is the RNase H type-1 domain. Mg(2+) is bound by residues Asp10, Glu48, Asp70, and Asp135.

The protein belongs to the RNase H family. As to quaternary structure, monomer. Mg(2+) is required as a cofactor.

Its subcellular location is the cytoplasm. The catalysed reaction is Endonucleolytic cleavage to 5'-phosphomonoester.. Its function is as follows. Endonuclease that specifically degrades the RNA of RNA-DNA hybrids. This is Ribonuclease H from Chlorobium luteolum (strain DSM 273 / BCRC 81028 / 2530) (Pelodictyon luteolum).